A 734-amino-acid polypeptide reads, in one-letter code: Oligopeptide transporter 2 (734 aa).

Transmembrane regions (helical) follow at residues 44 to 64 (MWFLGLLSCILLSFLNTFFGY), 68 to 88 (PLMITMISVQVVTLPLGKLMA), 125 to 145 (GAGFGSGTAYAVGIVDIIMAF), 152 to 172 (FLASWILVITTQILGYGWAGI), 211 to 231 (FFVIAFVCSFAWYIFPAYLFL), 252 to 272 (LGSGMSGLGIGAFALDWSVIA), 283 to 303 (FFAIVNVLVGYVLVMYMVIPI), 359 to 379 (FFAISYGIGFAAIVSTLTHVA), 414 to 434 (WWFYSLLAISLVLSLVLCIFM), 442 to 462 (WWGLLLASFMALTFTVPVSII), 525 to 545 (MFLVQFIGTVIAGTVNISVAW), 596 to 616 (YPALNWFFLGGLIGPVLVWLL), 644 to 664 (ATSVNFNCWIIVGVIFNYFVF), and 677 to 697 (VLSAALDAGLAFMGVLLYFSL).

This sequence belongs to the oligopeptide OPT transporter (TC 2.A.67.1) family. As to expression, expressed in flowers, leaves, roots, and stems.

It is found in the membrane. Its function is as follows. Involved in the translocation of tetra- and pentapeptides across the cellular membrane in an energy-dependent manner. This chain is Oligopeptide transporter 2 (OPT2), found in Arabidopsis thaliana (Mouse-ear cress).